Reading from the N-terminus, the 175-residue chain is METNCPNILYLSGITIEECLQTKKTATDTLNTNDDEAEVEKKLPSVFTTVSKWVTHSSFKCWTCHLYFKTVPKFVPTYMRENERGEIEMGVLGNFCSFSCAASYVDVHYTEPKRWEARELLNMLYRFFTSQWISYIKPAPSYTMRKEYGGKLSEEAFISELHTLEESISSKHIFI.

The protein belongs to the asfivirus B175L family.

This is an uncharacterized protein from African swine fever virus (strain Badajoz 1971 Vero-adapted) (Ba71V).